Here is a 533-residue protein sequence, read N- to C-terminus: L-aspartate oxidase (533 aa).

FAD is bound by residues 16-19, Lys38, 45-52, and Asp223; these read SGAA and ATFYAQGG. Arg290 functions as the Proton donor/acceptor in the catalytic mechanism. Residues Glu375 and 391–392 each bind FAD; that span reads SL.

The protein belongs to the FAD-dependent oxidoreductase 2 family. NadB subfamily. FAD is required as a cofactor.

It localises to the cytoplasm. It catalyses the reaction L-aspartate + O2 = iminosuccinate + H2O2. The protein operates within cofactor biosynthesis; NAD(+) biosynthesis; iminoaspartate from L-aspartate (oxidase route): step 1/1. In terms of biological role, catalyzes the oxidation of L-aspartate to iminoaspartate, the first step in the de novo biosynthesis of NAD(+). The chain is L-aspartate oxidase (nadB) from Yersinia pestis.